The following is a 478-amino-acid chain: Transposon Ty1-H Gag polyprotein (478 aa).

3 stretches are compositionally biased toward polar residues: residues 1–10 (MESQQLSNYP), 48–60 (TKANSQQTTTPAS), and 127–152 (QSQFPQYPSSVGTPLSTPSPESGNTF). 3 disordered regions span residues 1 to 84 (MESQ…QNGP), 126 to 174 (PQSQ…PPPM), and 390 to 478 (GSRN…PETY). The segment covering 153 to 165 (TDSSSADSDMTST) has biased composition (low complexity). The RNA-binding stretch occupies residues 337–439 (NNGIHINNKV…NSKSKTARAH (103 aa)). The span at 440 to 456 (NVSTSNNSPSTDNDSIS) shows a compositional bias: low complexity. Residues 457-466 (KSTTEPIQLN) are compositionally biased toward polar residues. Basic and acidic residues predominate over residues 467–478 (NKHDLHLRPETY).

In terms of assembly, homotrimer.

The protein localises to the cytoplasm. In terms of biological role, capsid protein (CA) is the structural component of the virus-like particle (VLP), forming the shell that encapsulates the retrotransposons dimeric RNA genome. The particles are assembled from trimer-clustered units and there are holes in the capsid shells that allow for the diffusion of macromolecules. CA also has nucleocapsid-like chaperone activity, promoting primer tRNA(i)-Met annealing to the multipartite primer-binding site (PBS), dimerization of Ty1 RNA and initiation of reverse transcription. The sequence is that of Transposon Ty1-H Gag polyprotein (TY1A-H) from Saccharomyces cerevisiae (strain ATCC 204508 / S288c) (Baker's yeast).